A 68-amino-acid polypeptide reads, in one-letter code: conotoxin S11.3 (68 aa).

The first 26 residues, 1 to 26 (MMFRLTSVSCFLLVIVCLNLFQVVLT), serve as a signal peptide directing secretion. 4 disulfides stabilise this stretch: C29–C43, C36–C48, C42–C52, and C47–C56. Position 60 is a tyrosine amide (Y60). A propeptide spanning residues 64–68 (ATFQE) is cleaved from the precursor.

Belongs to the conotoxin I2 superfamily. In terms of tissue distribution, expressed by the venom duct.

It is found in the secreted. This Conus striatus (Striated cone) protein is conotoxin S11.3.